Here is a 357-residue protein sequence, read N- to C-terminus: Putative DNA directed RNA polymerase subunit R470 (357 aa).

This sequence belongs to the archaeal Rpo11/eukaryotic RPB11/RPC19 RNA polymerase subunit family.

It localises to the virion. It carries out the reaction RNA(n) + a ribonucleoside 5'-triphosphate = RNA(n+1) + diphosphate. The protein is Putative DNA directed RNA polymerase subunit R470 of Acanthamoeba polyphaga mimivirus (APMV).